Reading from the N-terminus, the 218-residue chain is Embryonic polyadenylate-binding protein 2-A (218 aa).

The segment covering 1-16 (MSERVSEEPGLDKGDG) has biased composition (basic and acidic residues). Disordered regions lie at residues 1–26 (MSER…DDPE) and 169–218 (RTNM…NHPY). In terms of domain architecture, RRM spans 93–170 (RSVYVGNVDY…RTIKVLPKRT (78 aa)). Positions 205-218 (FRGCGRPGPLNHPY) are enriched in low complexity.

The protein localises to the cytoplasm. Functionally, binds the poly(A) tail of mRNA. Unable to interact with the cap-binding complex and is therefore unlikely to be involved in translation initiation. This Xenopus laevis (African clawed frog) protein is Embryonic polyadenylate-binding protein 2-A (Pabpn1l-a).